The chain runs to 201 residues: Recombination protein RecR (201 aa).

The segment at 60–75 (CKKCFNLTSEDECEIC) adopts a C4-type zinc-finger fold. Positions 83–177 (KLICVVAETK…KVTRIAYGLP (95 aa)) constitute a Toprim domain.

The protein belongs to the RecR family.

May play a role in DNA repair. It seems to be involved in an RecBC-independent recombinational process of DNA repair. It may act with RecF and RecO. The sequence is that of Recombination protein RecR from Prochlorococcus marinus (strain MIT 9215).